The following is a 356-amino-acid chain: Glutamine synthetase N-1 (356 aa).

The GS beta-grasp domain occupies 19–99 (VIAEYIWVGG…VMCDAYTPAG (81 aa)). The 251-residue stretch at 106–356 (KRHNAAKIFS…IAETTLLWKP (251 aa)) folds into the GS catalytic domain.

It belongs to the glutamine synthetase family. Homooctamer. In terms of tissue distribution, this is a nodule isozyme.

The protein resides in the cytoplasm. It catalyses the reaction L-glutamate + NH4(+) + ATP = L-glutamine + ADP + phosphate + H(+). This is Glutamine synthetase N-1 (Gln-gamma) from Phaseolus vulgaris (Kidney bean).